Reading from the N-terminus, the 299-residue chain is 4-diphosphocytidyl-2-C-methyl-D-erythritol kinase (299 aa).

K11 is an active-site residue. 94-104 (PQGGGLGGGSS) is an ATP binding site. D136 is an active-site residue.

Belongs to the GHMP kinase family. IspE subfamily.

It carries out the reaction 4-CDP-2-C-methyl-D-erythritol + ATP = 4-CDP-2-C-methyl-D-erythritol 2-phosphate + ADP + H(+). The protein operates within isoprenoid biosynthesis; isopentenyl diphosphate biosynthesis via DXP pathway; isopentenyl diphosphate from 1-deoxy-D-xylulose 5-phosphate: step 3/6. Catalyzes the phosphorylation of the position 2 hydroxy group of 4-diphosphocytidyl-2C-methyl-D-erythritol. In Bordetella bronchiseptica (strain ATCC BAA-588 / NCTC 13252 / RB50) (Alcaligenes bronchisepticus), this protein is 4-diphosphocytidyl-2-C-methyl-D-erythritol kinase.